The following is a 302-amino-acid chain: 4-hydroxy-tetrahydrodipicolinate synthase (302 aa).

Pyruvate is bound at residue threonine 55. Tyrosine 144 (proton donor/acceptor) is an active-site residue. Lysine 172 (schiff-base intermediate with substrate) is an active-site residue. Residue valine 214 coordinates pyruvate.

The protein belongs to the DapA family. As to quaternary structure, homotetramer; dimer of dimers.

The protein resides in the cytoplasm. It catalyses the reaction L-aspartate 4-semialdehyde + pyruvate = (2S,4S)-4-hydroxy-2,3,4,5-tetrahydrodipicolinate + H2O + H(+). Its pathway is amino-acid biosynthesis; L-lysine biosynthesis via DAP pathway; (S)-tetrahydrodipicolinate from L-aspartate: step 3/4. Its function is as follows. Catalyzes the condensation of (S)-aspartate-beta-semialdehyde [(S)-ASA] and pyruvate to 4-hydroxy-tetrahydrodipicolinate (HTPA). In Prochlorococcus marinus (strain MIT 9211), this protein is 4-hydroxy-tetrahydrodipicolinate synthase.